The following is a 93-amino-acid chain: CRISPR-associated endoribonuclease Cas2 (93 aa).

Asp13 provides a ligand contact to Mg(2+).

It belongs to the CRISPR-associated endoribonuclease Cas2 protein family. In terms of assembly, homodimer, forms a heterotetramer with a Cas1 homodimer. It depends on Mg(2+) as a cofactor.

In terms of biological role, CRISPR (clustered regularly interspaced short palindromic repeat), is an adaptive immune system that provides protection against mobile genetic elements (viruses, transposable elements and conjugative plasmids). CRISPR clusters contain sequences complementary to antecedent mobile elements and target invading nucleic acids. CRISPR clusters are transcribed and processed into CRISPR RNA (crRNA). Functions as a ssRNA-specific endoribonuclease. Involved in the integration of spacer DNA into the CRISPR cassette. This Korarchaeum cryptofilum (strain OPF8) protein is CRISPR-associated endoribonuclease Cas2.